Reading from the N-terminus, the 455-residue chain is Phosphoglucosamine mutase (455 aa).

Ser104 functions as the Phosphoserine intermediate in the catalytic mechanism. Residues Ser104, Asp243, Asp245, and Asp247 each coordinate Mg(2+). The residue at position 104 (Ser104) is a Phosphoserine.

It belongs to the phosphohexose mutase family. Mg(2+) serves as cofactor. Activated by phosphorylation.

It catalyses the reaction alpha-D-glucosamine 1-phosphate = D-glucosamine 6-phosphate. In terms of biological role, catalyzes the conversion of glucosamine-6-phosphate to glucosamine-1-phosphate. This is Phosphoglucosamine mutase from Synechococcus sp. (strain CC9311).